Consider the following 561-residue polypeptide: Amidophosphoribosyltransferase 2, chloroplastic (561 aa).

Positions 1–27 (MAATSSISSSLSLNAKPNKLSNNNNNN) are enriched in low complexity. The tract at residues 1 to 36 (MAATSSISSSLSLNAKPNKLSNNNNNNKPHRFLRNP) is disordered. The N-terminal 53 residues, 1–53 (MAATSSISSSLSLNAKPNKLSNNNNNNKPHRFLRNPFLNPSSSSFSPLPASIS), are a transit peptide targeting the chloroplast. C87 functions as the Nucleophile in the catalytic mechanism. The Glutamine amidotransferase type-2 domain maps to 87–307 (CGVVGIYGDS…PGEVLVVDKD (221 aa)). Residues C323, C469, C520, and C523 each contribute to the [4Fe-4S] cluster site.

It in the C-terminal section; belongs to the purine/pyrimidine phosphoribosyltransferase family. [4Fe-4S] cluster is required as a cofactor. Requires Mg(2+) as cofactor. In terms of tissue distribution, mostly expressed in leaves, and, to a lower extent, in cotyledons.

The protein resides in the plastid. The protein localises to the chloroplast stroma. The enzyme catalyses 5-phospho-beta-D-ribosylamine + L-glutamate + diphosphate = 5-phospho-alpha-D-ribose 1-diphosphate + L-glutamine + H2O. The protein operates within purine metabolism; IMP biosynthesis via de novo pathway; N(1)-(5-phospho-D-ribosyl)glycinamide from 5-phospho-alpha-D-ribose 1-diphosphate: step 1/2. Its activity is regulated as follows. Inhibited by the phenyltriazole acetic acid compound [5-(4-chlorophenyl)-1-isopropyl-1H-[1,2,4]triazol-3-yl]-acetic acid (DAS734), a bleaching herbicide. Functionally, catalyzes the first committed step of 'de novo purine biosynthesis from glutamine. Required for chloroplast biogenesis and cell division. Confers sensitivity to the phenyltriazole acetic acid compound [5-(4-chlorophenyl)-1-isopropyl-1H-[1,2,4]triazol-3-yl]-acetic acid (DAS734), a bleaching herbicide. The protein is Amidophosphoribosyltransferase 2, chloroplastic (ASE2) of Arabidopsis thaliana (Mouse-ear cress).